We begin with the raw amino-acid sequence, 125 residues long: Histone H2A (125 aa).

Over residues 1–18 the composition is skewed to basic residues; the sequence is MSGRGKGGKVKAKAKSRS. The interval 1-21 is disordered; the sequence is MSGRGKGGKVKAKAKSRSSRA. S2 carries the N-acetylserine modification. S2 bears the Phosphoserine mark. Residue K119 forms a Glycyl lysine isopeptide (Lys-Gly) (interchain with G-Cter in ubiquitin) linkage.

The protein belongs to the histone H2A family. In terms of assembly, the nucleosome is a histone octamer containing two molecules each of H2A, H2B, H3 and H4 assembled in one H3-H4 heterotetramer and two H2A-H2B heterodimers. The octamer wraps approximately 147 bp of DNA. Monoubiquitination of Lys-119 gives a specific tag for epigenetic transcriptional repression. In terms of processing, phosphorylation on Ser-2 is enhanced during mitosis. Phosphorylation on Ser-2 directly represses transcription.

The protein localises to the nucleus. It is found in the chromosome. Core component of nucleosome. Nucleosomes wrap and compact DNA into chromatin, limiting DNA accessibility to the cellular machineries which require DNA as a template. Histones thereby play a central role in transcription regulation, DNA repair, DNA replication and chromosomal stability. DNA accessibility is regulated via a complex set of post-translational modifications of histones, also called histone code, and nucleosome remodeling. This is Histone H2A from Chironomus thummi thummi (Midge).